The sequence spans 554 residues: MAAKDVRFSEDARHRMMHGVNVLADAVRVTLGPRGRNVVLEKSFGAPTITKDGVSVAKEIELKDRFENMGAQMVKEVASQTSDVAGDGTTTATVLAQSILREGMKAVAAGMNPMDLKRGVDKAVVAAVEELKKLSKPCEDSKAIGQVGTISANAEESVGKIIAEAMDKVGKEGVITVEEGSGLDNELEVVEGMQFDRGYLSPYFITDQQSMAADLDDPYILIHDKKISNIRDLLPVLESVAKAGKPLLVISEDVEGEALATLVVNTIRGIVKVCAVKAPGFGDRRKAMLEDIAVLTGGTVISEEVGLSLDKVTLDDLGRAKKITVNKENTTIVDGAGSADDIKARVEQVRIQIEEATSDYDKEKLQERVAKLAGGVAVIKVGAATEMEMKEKKARVEDALHATRAAVEEGVVPGGGVALIRALLGIKDLKGANHDQDVGINIARRAMEEPLRQIVNNSGEEASVIVNQIKGGEGNYGYNAATGEFGDMIAMGILDPTKVSRTALQNAASVAGLMITTEAMIAEAPKDEEASPGGAPGMGGGMGGMGGMGDMGMM.

ATP contacts are provided by residues 30-33 (TLGP), K51, 87-91 (DGTTT), G415, 479-481 (NAA), and D495.

It belongs to the chaperonin (HSP60) family. As to quaternary structure, forms a cylinder of 14 subunits composed of two heptameric rings stacked back-to-back. Interacts with the co-chaperonin GroES.

The protein resides in the cytoplasm. The enzyme catalyses ATP + H2O + a folded polypeptide = ADP + phosphate + an unfolded polypeptide.. Its function is as follows. Together with its co-chaperonin GroES, plays an essential role in assisting protein folding. The GroEL-GroES system forms a nano-cage that allows encapsulation of the non-native substrate proteins and provides a physical environment optimized to promote and accelerate protein folding. The sequence is that of Chaperonin GroEL from Nitrosococcus oceani (strain ATCC 19707 / BCRC 17464 / JCM 30415 / NCIMB 11848 / C-107).